Here is a 504-residue protein sequence, read N- to C-terminus: L-carnitine/gamma-butyrobetaine antiporter (504 aa).

A run of 12 helical transmembrane segments spans residues Ile10–Val30, Trp51–Phe71, Ile92–Ile112, Gly143–Val163, Phe195–Val215, Leu231–Leu251, Ser263–Met283, Trp316–Ala336, Leu347–Gly367, Trp398–Ala418, Leu446–Leu466, and Ala475–Ile495.

It belongs to the BCCT transporter (TC 2.A.15) family. CaiT subfamily. Homotrimer.

The protein resides in the cell inner membrane. It carries out the reaction 4-(trimethylamino)butanoate(in) + (R)-carnitine(out) = 4-(trimethylamino)butanoate(out) + (R)-carnitine(in). It functions in the pathway amine and polyamine metabolism; carnitine metabolism. Its function is as follows. Catalyzes the exchange of L-carnitine for gamma-butyrobetaine. In Escherichia coli O8 (strain IAI1), this protein is L-carnitine/gamma-butyrobetaine antiporter.